The sequence spans 213 residues: High frequency lysogenization protein HflD homolog (213 aa).

A coiled-coil region spans residues 79–126 (QGLNAELTRYTLSLMVLERKLSSAKGALDTLGNRINGLQRQLEHFDLQ).

Belongs to the HflD family.

The protein localises to the cytoplasm. Its subcellular location is the cell inner membrane. This chain is High frequency lysogenization protein HflD homolog, found in Shigella flexneri serotype 5b (strain 8401).